Reading from the N-terminus, the 82-residue chain is CLAVATA3/ESR (CLE)-related protein 53 (82 aa).

Positions 1–26 are cleaved as a signal peptide; it reads MATSTNSREFLIFICVLTLLVVRSEA. Hydroxyproline occurs at positions 74 and 77. Residue Pro77 is glycosylated (O-linked (Ara...) hydroxyproline).

This sequence belongs to the CLV3/ESR signal peptide family. Post-translationally, the O-glycosylation (arabinosylation) of the hydroxyproline Pro-77 enhances binding affinity of the CLE53p peptide for its receptor. Expressed in root vasculature.

It is found in the secreted. Its subcellular location is the extracellular space. Signaling peptide involved in the regulation of root colonization by arbuscular mycorrhizal (AM) fungi. Moves from root to shoot to function with the receptor kinase SUNN, in a signaling pathway that repress strigolactone biosynthetic genes and strigolactone content in the roots, and consequently reduces the promotion of further colonization by AM fungi. This chain is CLAVATA3/ESR (CLE)-related protein 53, found in Medicago truncatula (Barrel medic).